Consider the following 830-residue polypeptide: Venom phosphodiesterase (830 aa).

2 SMB domains span residues 7–50 (PLES…VLPT) and 51–95 (QSWS…RETS). 16 disulfides stabilise this stretch: Cys11-Cys15, Cys11-Cys28, Cys15-Cys46, Cys26-Cys28, Cys26-Cys39, Cys32-Cys38, Cys39-Cys46, Cys55-Cys60, Cys55-Cys72, Cys60-Cys90, Cys70-Cys72, Cys70-Cys83, Cys76-Cys82, Cys83-Cys90, Cys101-Cys147, and Cys109-Cys321. An N-linked (GlcNAc...) asparagine glycan is attached at Asn16. The Cell attachment site motif lies at 35-37 (RKA). A divalent metal cation is bound by residues Asp124 and Thr162. Catalysis depends on Thr162, which acts as the AMP-threonine intermediate. Asn193, Asn236, and Asn247 each carry an N-linked (GlcNAc...) asparagine glycan. Lys248 is an AMP binding site. 4 residues coordinate a divalent metal cation: Asp282, His286, Asp329, and His330. His286 contributes to the AMP binding site. 6 disulfide bridges follow: Cys337-Cys434, Cys385-Cys772, Cys518-Cys575, Cys531-Cys632, Cys533-Cys617, and Cys740-Cys750. An a divalent metal cation-binding site is contributed by His439. Residue Asn489 is glycosylated (N-linked (GlcNAc...) asparagine). Asn723 and Asn742 each carry an N-linked (GlcNAc...) asparagine glycan.

It belongs to the nucleotide pyrophosphatase/phosphodiesterase family. As to quaternary structure, monomer cleaved in two subunits; disulfide-linked. Is synthesized as a single-chain protein and is subsequently cleaved to form a two-subunit protein held together with disulfide bonds. A divalent metal cation serves as cofactor. In terms of tissue distribution, expressed by venom gland.

Its subcellular location is the secreted. The enzyme catalyses ADP + H2O = AMP + phosphate + H(+). Functionally, hydrolyzes ADP with high activity. Shows weak or no activity on 5'-AMP, 5'-GMP, 3'-AMP, ATP, cAMP, and cGMP. Is devoid of monophosphatase and proteinase activities. Dose-dependently inhibits platelet aggregation induced by ADP and collagen. This chain is Venom phosphodiesterase, found in Naja atra (Chinese cobra).